The sequence spans 411 residues: Carbohydrate sulfotransferase 5 (411 aa).

Topologically, residues 1-30 (MGMRARVPKVAHSTRRPPAARMWLPRFSSK) are cytoplasmic. A helical; Signal-anchor for type II membrane protein transmembrane segment spans residues 31-48 (TVTVLLLAQTTCLLLFII). Residues 49 to 411 (SRPGPSSPAG…PDHFSWASPD (363 aa)) are Lumenal-facing. Position 71-77 (71-77 (WRSGSSF)) interacts with 3'-phosphoadenylyl sulfate. Asn138 carries N-linked (GlcNAc...) asparagine glycosylation. 224–232 (RDPRAVLRS) lines the 3'-phosphoadenylyl sulfate pocket. 2 N-linked (GlcNAc...) asparagine glycosylation sites follow: Asn327 and Asn350.

This sequence belongs to the sulfotransferase 1 family. Gal/GlcNAc/GalNAc subfamily. Predominantly expressed in small and large intestines and colon. Weakly expressed in lymphocytes. Not expressed in other tissues. Down-regulated in colonic adenocarcinomas.

Its subcellular location is the golgi apparatus membrane. Its function is as follows. Sulfotransferase that utilizes 3'-phospho-5'-adenylyl sulfate (PAPS) as sulfonate donor to catalyze the transfer of sulfate to position 6 of non-reducing N-acetylglucosamine (GlcNAc) residues and O-linked sugars of mucin-type acceptors. Acts on the non-reducing terminal GlcNAc of short carbohydrate substrates. However, it does not transfer sulfate to longer carbohydrate substrates that have poly-N-acetyllactosamine structures. Has no activity toward keratan. Not involved in generating HEV-expressed ligands for SELL. Its substrate specificity may be influenced by its subcellular location. This is Carbohydrate sulfotransferase 5 (CHST5) from Homo sapiens (Human).